Consider the following 367-residue polypeptide: Glutamate 5-kinase (367 aa).

Lys-10 provides a ligand contact to ATP. Positions 50, 137, and 149 each coordinate substrate. Residues 169 to 170 and 211 to 217 contribute to the ATP site; these read TD and TGGMSTK. Residues 275–353 enclose the PUA domain; the sequence is AGEITVDEGA…QQIDAILGYE (79 aa).

Belongs to the glutamate 5-kinase family.

Its subcellular location is the cytoplasm. The enzyme catalyses L-glutamate + ATP = L-glutamyl 5-phosphate + ADP. It functions in the pathway amino-acid biosynthesis; L-proline biosynthesis; L-glutamate 5-semialdehyde from L-glutamate: step 1/2. Its function is as follows. Catalyzes the transfer of a phosphate group to glutamate to form L-glutamate 5-phosphate. The chain is Glutamate 5-kinase from Salmonella agona (strain SL483).